Here is a 37-residue protein sequence, read N- to C-terminus: Large ribosomal subunit protein bL36 (37 aa).

The protein belongs to the bacterial ribosomal protein bL36 family.

This is Large ribosomal subunit protein bL36 from Trichlorobacter lovleyi (strain ATCC BAA-1151 / DSM 17278 / SZ) (Geobacter lovleyi).